Consider the following 116-residue polypeptide: Vitelline membrane protein Vm32E (116 aa).

A signal peptide spans 1 to 17 (MKIVAFTLVAFVALAGA). The VM domain occupies 36 to 73 (GYPAPPCPTNYLFSCQPNLAPAPCAQEAPAYGSAGAYT).

It belongs to the vitelline membrane family.

The protein localises to the secreted. Its function is as follows. Major early eggshell protein. This Drosophila santomea (Fruit fly) protein is Vitelline membrane protein Vm32E.